The primary structure comprises 139 residues: ATP synthase epsilon chain (139 aa).

This sequence belongs to the ATPase epsilon chain family. In terms of assembly, F-type ATPases have 2 components, CF(1) - the catalytic core - and CF(0) - the membrane proton channel. CF(1) has five subunits: alpha(3), beta(3), gamma(1), delta(1), epsilon(1). CF(0) has three main subunits: a, b and c.

The protein resides in the cell inner membrane. Functionally, produces ATP from ADP in the presence of a proton gradient across the membrane. The sequence is that of ATP synthase epsilon chain from Haemophilus ducreyi (strain 35000HP / ATCC 700724).